Here is an 84-residue protein sequence, read N- to C-terminus: Small ribosomal subunit protein uS17 (84 aa).

This sequence belongs to the universal ribosomal protein uS17 family. As to quaternary structure, part of the 30S ribosomal subunit.

In terms of biological role, one of the primary rRNA binding proteins, it binds specifically to the 5'-end of 16S ribosomal RNA. This is Small ribosomal subunit protein uS17 from Karelsulcia muelleri (strain GWSS) (Sulcia muelleri).